Consider the following 92-residue polypeptide: UPF0250 protein Avin_08440 (92 aa).

This sequence belongs to the UPF0250 family.

The polypeptide is UPF0250 protein Avin_08440 (Azotobacter vinelandii (strain DJ / ATCC BAA-1303)).